A 190-amino-acid chain; its full sequence is NADH-quinone oxidoreductase subunit B (190 aa).

Residues Cys-67, Cys-68, Cys-132, and Cys-162 each contribute to the [4Fe-4S] cluster site.

This sequence belongs to the complex I 20 kDa subunit family. In terms of assembly, NDH-1 is composed of 14 different subunits. Subunits NuoB, C, D, E, F, and G constitute the peripheral sector of the complex. It depends on [4Fe-4S] cluster as a cofactor.

The protein resides in the cell inner membrane. It catalyses the reaction a quinone + NADH + 5 H(+)(in) = a quinol + NAD(+) + 4 H(+)(out). NDH-1 shuttles electrons from NADH, via FMN and iron-sulfur (Fe-S) centers, to quinones in the respiratory chain. The immediate electron acceptor for the enzyme in this species is believed to be ubiquinone. Couples the redox reaction to proton translocation (for every two electrons transferred, four hydrogen ions are translocated across the cytoplasmic membrane), and thus conserves the redox energy in a proton gradient. The chain is NADH-quinone oxidoreductase subunit B from Anaplasma marginale (strain Florida).